A 508-amino-acid chain; its full sequence is Lysine--tRNA ligase (508 aa).

Glu-418 and Glu-425 together coordinate Mg(2+).

It belongs to the class-II aminoacyl-tRNA synthetase family. Homodimer. The cofactor is Mg(2+).

It localises to the cytoplasm. It carries out the reaction tRNA(Lys) + L-lysine + ATP = L-lysyl-tRNA(Lys) + AMP + diphosphate. The chain is Lysine--tRNA ligase from Burkholderia vietnamiensis (strain G4 / LMG 22486) (Burkholderia cepacia (strain R1808)).